The following is a 596-amino-acid chain: Beta-fructofuranosidase, insoluble isoenzyme 7 (596 aa).

The signal sequence occupies residues 1–24 (MARLGLAVCAASFHLFLLLASTSS). Substrate contacts are provided by residues 51–54 (WQND), Gln70, and Trp78. Asp54 is a catalytic residue. The N-linked (GlcNAc...) asparagine glycan is linked to Asn82. Substrate-binding positions include 115-116 (WS), 179-180 (RD), and Glu234. Asn330 is a glycosylation site (N-linked (GlcNAc...) asparagine). Cys432 and Cys478 are oxidised to a cystine. A glycan (N-linked (GlcNAc...) asparagine) is linked at Asn552.

It belongs to the glycosyl hydrolase 32 family. Expressed in roots, leaves and flowers. Weakly expressed in seeds.

The protein localises to the secreted. The protein resides in the extracellular space. Its subcellular location is the apoplast. It localises to the cell wall. It catalyses the reaction Hydrolysis of terminal non-reducing beta-D-fructofuranoside residues in beta-D-fructofuranosides.. In terms of biological role, may play a role in sucrose partitioning during seed development. In Oryza sativa subsp. japonica (Rice), this protein is Beta-fructofuranosidase, insoluble isoenzyme 7 (CIN7).